Reading from the N-terminus, the 340-residue chain is Phosphoribosylformylglycinamidine cyclo-ligase (340 aa).

This sequence belongs to the AIR synthase family.

The protein resides in the cytoplasm. The enzyme catalyses 2-formamido-N(1)-(5-O-phospho-beta-D-ribosyl)acetamidine + ATP = 5-amino-1-(5-phospho-beta-D-ribosyl)imidazole + ADP + phosphate + H(+). It participates in purine metabolism; IMP biosynthesis via de novo pathway; 5-amino-1-(5-phospho-D-ribosyl)imidazole from N(2)-formyl-N(1)-(5-phospho-D-ribosyl)glycinamide: step 2/2. This chain is Phosphoribosylformylglycinamidine cyclo-ligase, found in Streptococcus pyogenes serotype M2 (strain MGAS10270).